A 147-amino-acid polypeptide reads, in one-letter code: Transcription elongation factor Spt5 (147 aa).

A KOW domain is found at 91 to 122 (KGDVVEIIAGPFKGERAKVIRVDKHKEEVTLE).

Belongs to the archaeal Spt5 family. Heterodimer composed of Spt4 and Spt5. Interacts with RNA polymerase (RNAP). Forms a homodimer in solution.

Its function is as follows. Stimulates transcription elongation. The chain is Transcription elongation factor Spt5 from Methanocaldococcus jannaschii (strain ATCC 43067 / DSM 2661 / JAL-1 / JCM 10045 / NBRC 100440) (Methanococcus jannaschii).